Here is a 284-residue protein sequence, read N- to C-terminus: tRNA uridine(34) hydroxylase (284 aa).

Positions 132 to 226 (TGRPVVMLDT…YFEEVGGAHY (95 aa)) constitute a Rhodanese domain. The Cysteine persulfide intermediate role is filled by C186.

Belongs to the TrhO family.

It catalyses the reaction uridine(34) in tRNA + AH2 + O2 = 5-hydroxyuridine(34) in tRNA + A + H2O. Catalyzes oxygen-dependent 5-hydroxyuridine (ho5U) modification at position 34 in tRNAs. The protein is tRNA uridine(34) hydroxylase of Burkholderia cenocepacia (strain ATCC BAA-245 / DSM 16553 / LMG 16656 / NCTC 13227 / J2315 / CF5610) (Burkholderia cepacia (strain J2315)).